Reading from the N-terminus, the 123-residue chain is Small ribosomal subunit protein uS12cz/uS12cy (123 aa).

This sequence belongs to the universal ribosomal protein uS12 family. Part of the 30S ribosomal subunit.

The protein resides in the plastid. Its subcellular location is the chloroplast. With S4 and S5 plays an important role in translational accuracy. Located at the interface of the 30S and 50S subunits. This chain is Small ribosomal subunit protein uS12cz/uS12cy (rps12-A), found in Drimys granadensis.